A 342-amino-acid chain; its full sequence is tRNA-specific 2-thiouridylase MnmA 2 (342 aa).

C62 acts as the Nucleophile in catalysis. C62 and C160 form a disulfide bridge. G86 contributes to the ATP binding site. Residues 110-112 (KDQ) are interaction with tRNA. C160 serves as the catalytic Cysteine persulfide intermediate. Positions 268-269 (RY) are interaction with tRNA.

The protein belongs to the MnmA/TRMU family.

The protein localises to the cytoplasm. The catalysed reaction is S-sulfanyl-L-cysteinyl-[protein] + uridine(34) in tRNA + AH2 + ATP = 2-thiouridine(34) in tRNA + L-cysteinyl-[protein] + A + AMP + diphosphate + H(+). Catalyzes the 2-thiolation of uridine at the wobble position (U34) of tRNA, leading to the formation of s(2)U34. The sequence is that of tRNA-specific 2-thiouridylase MnmA 2 from Syntrophus aciditrophicus (strain SB).